Reading from the N-terminus, the 469-residue chain is 3-isopropylmalate dehydratase large subunit (469 aa).

C347, C410, and C413 together coordinate [4Fe-4S] cluster.

This sequence belongs to the aconitase/IPM isomerase family. LeuC type 1 subfamily. As to quaternary structure, heterodimer of LeuC and LeuD. It depends on [4Fe-4S] cluster as a cofactor.

It carries out the reaction (2R,3S)-3-isopropylmalate = (2S)-2-isopropylmalate. It functions in the pathway amino-acid biosynthesis; L-leucine biosynthesis; L-leucine from 3-methyl-2-oxobutanoate: step 2/4. Functionally, catalyzes the isomerization between 2-isopropylmalate and 3-isopropylmalate, via the formation of 2-isopropylmaleate. This Burkholderia mallei (strain NCTC 10247) protein is 3-isopropylmalate dehydratase large subunit.